Consider the following 259-residue polypeptide: Src-like-adapter 2 (259 aa).

A compositionally biased stretch (low complexity) spans 1-20; it reads MGSLSSRGKTSSPSPSSSGP. Residues 1 to 30 form a disordered region; that stretch reads MGSLSSRGKTSSPSPSSSGPDQEPVSMQPE. The N-myristoyl glycine moiety is linked to residue Gly2. An SH3 domain is found at 31 to 91; the sequence is RHKVTAVALG…PSVYVAKVAH (61 aa). The region spanning 93–190 is the SH2 domain; the sequence is WLYEGLSREK…GICCPLREPC (98 aa). An SLA C-terminal region spans residues 190–259; the sequence is CVLQKLGPLP…SLAEDPLDDA (70 aa).

As to quaternary structure, interacts (via its C-terminal domain) with CBL (phosphorylated). Interacts (via SH2 domain) with ZAP70 (phosphorylated) and CD3Z (phosphorylated). Interacts (via SH2 domain) with CSF1R (phosphorylated). Post-translationally, phosphorylated by CSF1R. Mainly expressed in immune system. Highly expressed in spleen and thymus and expressed at intermediate levels in lung. Not expressed in liver, heart and brain. Isoform 1 is predominant in lung and spleen, while isoform 2 is predominant in thymus.

It is found in the cytoplasm. It localises to the cell membrane. The protein resides in the cytoplasmic vesicle. Its subcellular location is the late endosome. In terms of biological role, adapter protein, which negatively regulates T-cell receptor (TCR) signaling. Inhibits T-cell antigen-receptor induced activation of nuclear factor of activated T-cells. May act by linking signaling proteins such as ZAP70 with CBL, leading to a CBL dependent degradation of signaling proteins. The protein is Src-like-adapter 2 (Sla2) of Mus musculus (Mouse).